The following is a 159-amino-acid chain: 17.7 kDa class I heat shock protein (159 aa).

The 115-residue stretch at 45–159 (DAAAFAGARI…PDVKSIQISG (115 aa)) folds into the sHSP domain.

This sequence belongs to the small heat shock protein (HSP20) family. May form oligomeric structures.

The protein resides in the cytoplasm. This is 17.7 kDa class I heat shock protein (HSP17.7) from Oryza sativa subsp. japonica (Rice).